The following is a 544-amino-acid chain: Glucose-6-phosphate isomerase (544 aa).

E354 serves as the catalytic Proton donor. Residues H385 and K510 contribute to the active site.

It belongs to the GPI family.

It is found in the cytoplasm. The catalysed reaction is alpha-D-glucose 6-phosphate = beta-D-fructose 6-phosphate. It functions in the pathway carbohydrate biosynthesis; gluconeogenesis. Its pathway is carbohydrate degradation; glycolysis; D-glyceraldehyde 3-phosphate and glycerone phosphate from D-glucose: step 2/4. Functionally, catalyzes the reversible isomerization of glucose-6-phosphate to fructose-6-phosphate. The polypeptide is Glucose-6-phosphate isomerase (Deinococcus deserti (strain DSM 17065 / CIP 109153 / LMG 22923 / VCD115)).